Consider the following 951-residue polypeptide: Leucine-rich repeat-containing G-protein coupled receptor 4 (951 aa).

An N-terminal signal peptide occupies residues 1–24; the sequence is MPGPLRLLCFFALGLLGSAGPSGA. In terms of domain architecture, LRRNT spans 25-57; the sequence is APPLCAAPCSCDGDRRVDCSGKGLTAVPEGLSA. The Extracellular portion of the chain corresponds to 25 to 544; the sequence is APPLCAAPCS…LLGSWMIRLT (520 aa). Cystine bridges form between Cys-29–Cys-35 and Cys-33–Cys-43. 15 LRR repeats span residues 58–79, 82–103, 106–127, 130–151, 154–177, 178–199, 202–223, 226–247, 249–270, 273–294, 320–341, 344–365, 366–387, 390–411, and 414–435; these read FTQALDISMNNITQLPEDAFKN, FLEELQLAGNDLSFIHPKALSG, ELKVLTLQNNQLKTVPSEAIRG, ALQSLRLDANHITSVPEDSFEG, QLRHLWLDDNILTEVPVRPLSNLP, TLQALTLALNNISSIPDFAFTN, SLVVLHLHNNKIKSLSQHCFDG, NLETLDLNYNNLDEFPQAIKAL, SLKELGFHSNSISVIPDGAFAG, LLRTIHLYDNPLSFVGNSAFHN, HLESLTLTGTKISSIPDDLCQN, MLRTLDLSYNDIRDLPSFNGCR, ALEEISLQRNQISLIKETTFQG, SLRILDLSRNLIREIHSGAFAK, and TITNLDVSFNELTSFPTEGLNG. An N-linked (GlcNAc...) asparagine glycan is attached at Asn-68. N-linked (GlcNAc...) asparagine glycosylation is found at Asn-188 and Asn-199. Asn-294 carries an N-linked (GlcNAc...) asparagine glycan. An intrachain disulfide couples Cys-339 to Cys-364. 2 disulfides stabilise this stretch: Cys-470/Cys-522 and Cys-471/Cys-476. The interval 487-512 is disordered; it reads NSPQDHSVTKEKGATDAANATSTAES. The span at 501-510 shows a compositional bias: low complexity; it reads TDAANATSTA. Asn-505 is a glycosylation site (N-linked (GlcNAc...) asparagine). Residues 545 to 565 traverse the membrane as a helical segment; sequence VWFIFLVALLFNLLVILTVFA. The Cytoplasmic segment spans residues 566-575; it reads SCSSLPASKL. Residues 576-596 form a helical membrane-spanning segment; the sequence is FIGLISVSNLLMGIYTGILTF. At 597–619 the chain is on the extracellular side; sequence LDAVSWGRFAEFGIWWETGSGCK. A disulfide bridge connects residues Cys-618 and Cys-693. Residues 620 to 640 form a helical membrane-spanning segment; it reads VAGSLAVFSSESAVFLLTLAA. The Cytoplasmic portion of the chain corresponds to 641 to 661; sequence VERSVFAKDVMKNGKSSHLRQ. The helical transmembrane segment at 662–682 threads the bilayer; sequence FQVAALVALLGAAIAGCFPLF. The Extracellular portion of the chain corresponds to 683 to 703; it reads HGGQYSASPLCLPFPTGETPS. A helical transmembrane segment spans residues 704–724; it reads LGFTVTLVLLNSLAFLLMAII. The Cytoplasmic portion of the chain corresponds to 725–756; the sequence is YTKLYCNLEKEDPSENSQSSMIKHVAWLIFTN. A helical transmembrane segment spans residues 757–777; the sequence is CIFFCPVAFFSFAPLITAISI. Over 778–783 the chain is Extracellular; sequence SPEIMK. A helical transmembrane segment spans residues 784–804; it reads SVTLIFFPLPACLNPVLYVFF. Residues 805 to 951 are Cytoplasmic-facing; the sequence is NPKFKDDWKL…YAYNLPRVRD (147 aa). Ser-920 carries the post-translational modification Phosphoserine.

This sequence belongs to the G-protein coupled receptor 1 family.

Its subcellular location is the cell membrane. Functionally, receptor for R-spondins that potentiates the canonical Wnt signaling pathway and is involved in the formation of various organs. Upon binding to R-spondins (RSPO1, RSPO2, RSPO3 or RSPO4), associates with phosphorylated LRP6 and frizzled receptors that are activated by extracellular Wnt receptors, triggering the canonical Wnt signaling pathway to increase expression of target genes. In contrast to classical G-protein coupled receptors, does not activate heterotrimeric G-proteins to transduce the signal. Its function as activator of the Wnt signaling pathway is required for the development of various organs, including liver, kidney, intestine, bone, reproductive tract and eye. May also act as a receptor for norrin (NDP), such results however require additional confirmation in vivo. Required during spermatogenesis to activate the Wnt signaling pathway in peritubular myoid cells. Required for the maintenance of intestinal stem cells and Paneth cell differentiation in postnatal intestinal crypts. Acts as a regulator of bone formation and remodeling. Involved in kidney development; required for maintaining the ureteric bud in an undifferentiated state. Involved in the development of the anterior segment of the eye. Required during erythropoiesis. Also acts as a negative regulator of innate immunity by inhibiting TLR2/TLR4 associated pattern-recognition and pro-inflammatory cytokine production. Plays an important role in regulating the circadian rhythms of plasma lipids, partially through regulating the rhythmic expression of MTTP. Required for proper development of GnRH neurons (gonadotropin-releasing hormone expressing neurons) that control the release of reproductive hormones from the pituitary gland. The sequence is that of Leucine-rich repeat-containing G-protein coupled receptor 4 (Lgr4) from Mus musculus (Mouse).